A 72-amino-acid chain; its full sequence is Crustacean hyperglycemic hormone B (72 aa).

Pyrrolidone carboxylic acid is present on glutamine 1. Phenylalanine 3 carries the post-translational modification D-phenylalanine; in form CHHB-II. 3 cysteine pairs are disulfide-bonded: cysteine 7–cysteine 43, cysteine 23–cysteine 39, and cysteine 26–cysteine 52. Valine amide is present on valine 72.

Stereoinversion of L-Phe (in CHHB-I) to D-Phe (in CHHB-II).

It is found in the secreted. In terms of biological role, hormone found in the sinus gland of isopods and decapods which controls the blood sugar level. Has a secretagogue action over the amylase released from the midgut gland. May act as a stress hormone and may be involved in the control of molting and reproduction. This Cherax destructor (Common yabby crayfish) protein is Crustacean hyperglycemic hormone B.